A 250-amino-acid polypeptide reads, in one-letter code: Ribosomal RNA small subunit methyltransferase J (250 aa).

S-adenosyl-L-methionine is bound by residues 96-97 (RD) and aspartate 168.

This sequence belongs to the methyltransferase superfamily. RsmJ family.

It is found in the cytoplasm. It catalyses the reaction guanosine(1516) in 16S rRNA + S-adenosyl-L-methionine = N(2)-methylguanosine(1516) in 16S rRNA + S-adenosyl-L-homocysteine + H(+). Functionally, specifically methylates the guanosine in position 1516 of 16S rRNA. This Neisseria gonorrhoeae (strain ATCC 700825 / FA 1090) protein is Ribosomal RNA small subunit methyltransferase J.